A 1034-amino-acid chain; its full sequence is N-acetyl-beta-glucosaminyl-glycoprotein 4-beta-N-acetylgalactosaminyltransferase 1 (1034 aa).

Topologically, residues M1–Q12 are cytoplasmic. The chain crosses the membrane as a helical; Signal-anchor for type II membrane protein span at residues M13–V31. At H32–S1034 the chain is on the lumenal side. A disordered region spans residues D51–P104. A compositionally biased stretch (basic and acidic residues) spans R72–E83. Residue N106 is glycosylated (N-linked (GlcNAc...) asparagine). In terms of domain architecture, PA14 spans H109–H279. Disordered regions lie at residues P450–T486 and R556–G600. Positions T461–S473 are enriched in low complexity. The N-linked (GlcNAc...) asparagine glycan is linked to N611. Disordered stretches follow at residues S626–R669 and G782–S801. Positions E636–P661 are enriched in acidic residues.

Belongs to the chondroitin N-acetylgalactosaminyltransferase family.

It localises to the golgi apparatus. The protein resides in the golgi stack membrane. The catalysed reaction is an N-acetyl-beta-D-glucosaminyl derivative + UDP-N-acetyl-alpha-D-galactosamine = an N-acetyl-beta-D-galactosaminyl-(1-&gt;4)-N-acetyl-beta-D-glucosaminyl derivative + UDP + H(+). Functionally, transfers N-acetylgalactosamine (GalNAc) from UDP-GalNAc to N-acetylglucosamine-beta-benzyl with a beta-1,4-linkage to form N,N'-diacetyllactosediamine, GalNAc-beta-1,4-GlcNAc structures in N-linked glycans and probably O-linked glycans. The polypeptide is N-acetyl-beta-glucosaminyl-glycoprotein 4-beta-N-acetylgalactosaminyltransferase 1 (B4galnt4) (Mus musculus (Mouse)).